Consider the following 526-residue polypeptide: Transcription factor kayak (526 aa).

Disordered stretches follow at residues 71–165 and 178–221; these read PPLA…GTGG and RNTN…NKQA. Composition is skewed to low complexity over residues 78 to 87 and 133 to 153; these read NNNNNNNNNG and ISDTSSGATDSTSYQNGHMMG. Gly residues predominate over residues 154-165; the sequence is NSGGGNGGGTGG. The segment covering 178-187 has biased composition (polar residues); that stretch reads RNTNTSNSAT. The region spanning 208–271 is the bZIP domain; the sequence is EEKRRIRRER…NQLEYFLQAH (64 aa). The basic motif stretch occupies residues 210 to 229; the sequence is KRRIRRERNKQAAARCRKRR. The tract at residues 236 to 264 is leucine-zipper; sequence LTEEVELLEKRGENLKKEMELLNETKNQL. The segment covering 301 to 322 has biased composition (low complexity); the sequence is GSCGSGSSHHNNNSNSNDSSSG. 2 disordered regions span residues 301–345 and 504–526; these read GSCG…DLKP and TSQNKHPLELPTPTTEPSKLVSL. Residues 330 to 340 are compositionally biased toward polar residues; sequence TLNSTGRSNSP. A Phosphoserine modification is found at S339.

It belongs to the bZIP family. Fos subfamily. As to quaternary structure, homodimer. Heterodimer with Jra. The kay-Jra heterodimer binds more stably to the AP-1 site than either of the two proteins alone.

It localises to the nucleus. In terms of biological role, developmentally regulated transcription factor AP-1 binds and recognizes the enhancer DNA sequence: 5'-TGA[CG]TCA-3'. May play a role in the function or determination of a particular subset of cells in the developing embryo. It is able to carry out its function either independently of or in conjunction with Jra. In Drosophila persimilis (Fruit fly), this protein is Transcription factor kayak.